The sequence spans 129 residues: Small ribosomal subunit protein uS11 (129 aa).

This sequence belongs to the universal ribosomal protein uS11 family. In terms of assembly, part of the 30S ribosomal subunit. Interacts with proteins S7 and S18. Binds to IF-3.

In terms of biological role, located on the platform of the 30S subunit, it bridges several disparate RNA helices of the 16S rRNA. Forms part of the Shine-Dalgarno cleft in the 70S ribosome. This Yersinia pseudotuberculosis serotype O:1b (strain IP 31758) protein is Small ribosomal subunit protein uS11.